We begin with the raw amino-acid sequence, 307 residues long: 17-beta-hydroxysteroid dehydrogenase type 3 (307 aa).

Residues 6 to 26 (IIFVLTGTCAILVFGGKIASL) form a helical membrane-spanning segment. NADP(+) is bound at residue 47–76 (GKWAVITGGSDGIGRAYAEELSKQGMSVII). Serine 187 contacts substrate. Residue tyrosine 200 is the Proton acceptor of the active site.

The protein belongs to the short-chain dehydrogenases/reductases (SDR) family. As to expression, expression shows strong sexual dimorphism. In female, highly expressed in ovaries, and at lower levels in skin muscle, eyes and liver. In males, strongly expressed in liver and at lower levels in testis, spleen, kidney, intestine and muscle.

It localises to the endoplasmic reticulum. It is found in the membrane. It catalyses the reaction a 17beta-hydroxy steroid + NADP(+) = a 17-oxo steroid + NADPH + H(+). It carries out the reaction testosterone + NADP(+) = androst-4-ene-3,17-dione + NADPH + H(+). The enzyme catalyses 3beta-hydroxyandrost-5-en-17-one + NADPH + H(+) = androst-5-en-3beta,17beta-diol + NADP(+). The catalysed reaction is 3beta-hydroxy-5alpha-androstan-17-one + NADPH + H(+) = 5alpha-androstane-3beta,17beta-diol + NADP(+). It catalyses the reaction androst-4-ene-3,11,17-trione + NADPH + H(+) = 17beta-hydroxyandrost-4-ene-3,11-dione + NADP(+). It carries out the reaction 11beta-hydroxyandrost-4-ene-3,17-dione + NADPH + H(+) = 11beta,17beta-dihydroxyandrost-4-ene-3-one + NADP(+). Its pathway is hormone biosynthesis; testosterone biosynthesis. It participates in steroid metabolism. In terms of biological role, catalyzes the conversion of 17-oxosteroids to 17beta-hydroxysteroids in the presence of NADPH. Favors the reduction of androstenedione to testosterone. Testosterone is the key androgen driving male development and function. Among further tested androgens epiandrosterone and dehydroepiandrosterone are accepted as substrates and reduced at C-17. Can also reduce 11-ketoandrostenedione as well as 11beta-hydroxyandrostenedione at C-17 to the respective testosterone forms. Cannot use androsterone and androstanedione as substrates. This chain is 17-beta-hydroxysteroid dehydrogenase type 3 (hsd17b3), found in Danio rerio (Zebrafish).